The chain runs to 655 residues: p-hydroxybenzoic acid efflux pump subunit AaeB (655 aa).

A run of 11 helical transmembrane segments spans residues 13-33, 38-58, 69-89, 93-113, 121-141, 152-172, 370-390, 407-427, 431-451, 455-475, and 482-502; these read FAVK…HFQL, WAVL…GGEP, LRII…IAMI, LLMI…SSLV, WGLA…EPLL, EIVI…PRSI, LFWL…IAVV, FIYG…VIIP, QSML…GIEV, LLGS…DNPM, and FLDS…VILL.

It belongs to the aromatic acid exporter ArAE (TC 2.A.85) family.

It localises to the cell inner membrane. In terms of biological role, forms an efflux pump with AaeA. Could function as a metabolic relief valve, allowing to eliminate certain compounds when they accumulate to high levels in the cell. The chain is p-hydroxybenzoic acid efflux pump subunit AaeB from Shigella boydii serotype 4 (strain Sb227).